A 430-amino-acid chain; its full sequence is Long-chain specific acyl-CoA dehydrogenase, mitochondrial (430 aa).

The N-terminal 30 residues, 1–30, are a transit peptide targeting the mitochondrion; that stretch reads MAARLLLRSLRVLKARSAPRPPPSARCSHS. The interval 17–39 is disordered; that stretch reads SAPRPPPSARCSHSGAEARLETP. Lysine 42 is modified (N6-acetyllysine). Phosphoserine is present on residues serine 54 and serine 55. 2 positions are modified to N6-acetyllysine; alternate: lysine 66 and lysine 81. Residues lysine 66 and lysine 81 each carry the N6-succinyllysine; alternate modification. 2 positions are modified to N6-acetyllysine: lysine 92 and lysine 95. Lysine 165 carries the post-translational modification N6-succinyllysine. FAD is bound at residue 170–179; it reads IAMTEPGAGS. Serine 179 contributes to the substrate binding site. Phosphoserine is present on serine 191. Residue 203 to 205 participates in FAD binding; it reads FIT. 227–228 is a binding site for substrate; it reads AH. Position 240 is an N6-succinyllysine (lysine 240). N6-acetyllysine; alternate occurs at positions 254 and 279. Lysine 254 and lysine 279 each carry N6-succinyllysine; alternate. Residues tyrosine 282 and 289-292 each bind substrate; that span reads PQER. Catalysis depends on glutamate 291, which acts as the Proton acceptor. An FAD-binding site is contributed by arginine 317. Residue lysine 318 is modified to N6-acetyllysine. At lysine 322 the chain carries N6-acetyllysine; alternate. Lysine 322 carries the post-translational modification N6-succinyllysine; alternate. FAD is bound at residue glutamine 328. Position 358 is an N6-acetyllysine (lysine 358). Phosphoserine is present on serine 362. 385-389 contacts FAD; sequence QLHGG. A substrate-binding site is contributed by 412–413; that stretch reads GG. 414–416 contributes to the FAD binding site; the sequence is TNE.

The protein belongs to the acyl-CoA dehydrogenase family. In terms of assembly, homotetramer. FAD is required as a cofactor. In terms of processing, acetylation at Lys-318 and Lys-322 in proximity of the cofactor-binding sites strongly reduces catalytic activity. These sites are deacetylated by SIRT3. Expressed in heart, skeletal muscle, kidney, and brain. Expressed in liver (at protein level).

The protein localises to the mitochondrion matrix. It carries out the reaction a long-chain 2,3-saturated fatty acyl-CoA + oxidized [electron-transfer flavoprotein] + H(+) = a long-chain (2E)-enoyl-CoA + reduced [electron-transfer flavoprotein]. The enzyme catalyses oxidized [electron-transfer flavoprotein] + hexadecanoyl-CoA + H(+) = (2E)-hexadecenoyl-CoA + reduced [electron-transfer flavoprotein]. The catalysed reaction is hexanoyl-CoA + oxidized [electron-transfer flavoprotein] + H(+) = (2E)-hexenoyl-CoA + reduced [electron-transfer flavoprotein]. It catalyses the reaction octanoyl-CoA + oxidized [electron-transfer flavoprotein] + H(+) = (2E)-octenoyl-CoA + reduced [electron-transfer flavoprotein]. It carries out the reaction decanoyl-CoA + oxidized [electron-transfer flavoprotein] + H(+) = (2E)-decenoyl-CoA + reduced [electron-transfer flavoprotein]. The enzyme catalyses dodecanoyl-CoA + oxidized [electron-transfer flavoprotein] + H(+) = (2E)-dodecenoyl-CoA + reduced [electron-transfer flavoprotein]. The catalysed reaction is tetradecanoyl-CoA + oxidized [electron-transfer flavoprotein] + H(+) = (2E)-tetradecenoyl-CoA + reduced [electron-transfer flavoprotein]. It catalyses the reaction octadecanoyl-CoA + oxidized [electron-transfer flavoprotein] + H(+) = (2E)-octadecenoyl-CoA + reduced [electron-transfer flavoprotein]. It carries out the reaction eicosanoyl-CoA + oxidized [electron-transfer flavoprotein] + H(+) = (2E)-eicosenoyl-CoA + reduced [electron-transfer flavoprotein]. The enzyme catalyses docosanoyl-CoA + oxidized [electron-transfer flavoprotein] + H(+) = (2E)-docosenoyl-CoA + reduced [electron-transfer flavoprotein]. The catalysed reaction is tetracosanoyl-CoA + oxidized [electron-transfer flavoprotein] + H(+) = (2E)-tetracosenoyl-CoA + reduced [electron-transfer flavoprotein]. It catalyses the reaction (5E)-tetradecenoyl-CoA + oxidized [electron-transfer flavoprotein] + H(+) = (2E,5E)-tetradecadienoyl-CoA + reduced [electron-transfer flavoprotein]. It carries out the reaction (5Z)-tetradecenoyl-CoA + oxidized [electron-transfer flavoprotein] + H(+) = (2E,5Z)-tetradecadienoyl-CoA + reduced [electron-transfer flavoprotein]. The enzyme catalyses oxidized [electron-transfer flavoprotein] + (9Z)-octadecenoyl-CoA + H(+) = (2E,9Z)-octadecadienoyl-CoA + reduced [electron-transfer flavoprotein]. It functions in the pathway lipid metabolism; mitochondrial fatty acid beta-oxidation. Functionally, long-chain specific acyl-CoA dehydrogenase is one of the acyl-CoA dehydrogenases that catalyze the first step of mitochondrial fatty acid beta-oxidation, an aerobic process breaking down fatty acids into acetyl-CoA and allowing the production of energy from fats. The first step of fatty acid beta-oxidation consists in the removal of one hydrogen from C-2 and C-3 of the straight-chain fatty acyl-CoA thioester, resulting in the formation of trans-2-enoyl-CoA. Among the different mitochondrial acyl-CoA dehydrogenases, long-chain specific acyl-CoA dehydrogenase can act on saturated and unsaturated acyl-CoAs with 6 to 24 carbons with a preference for 8 to 18 carbons long primary chains. The polypeptide is Long-chain specific acyl-CoA dehydrogenase, mitochondrial (Mus musculus (Mouse)).